The sequence spans 438 residues: chitinase-like effector (438 aa).

The N-terminal stretch at 1–23 (MFTPLSSVTALLALSSAFLGAQA) is a signal peptide. One can recognise a GH18 domain in the interval 54–437 (FIAKGYYTGW…DAIRSGAGLS (384 aa)). Trp-416 is a chitin binding site.

The protein belongs to the glycosyl hydrolase 18 family.

It is found in the secreted. In terms of biological role, catalytically impaired chitinase that binds efficiently to chitin, but not to chitosan, xylan, or cellulose. Despite the lack of chitinolytic activity, retains substrate binding specificity and acts as an effector to prevent chitin-triggered immunity by sequestering immunogenic chitin fragments. Does not function in the protection of fungal cell wall against plant hydrolytic enzymes. In Moniliophthora perniciosa (Witches'-broom disease fungus), this protein is chitinase-like effector.